A 72-amino-acid polypeptide reads, in one-letter code: Small ribosomal subunit protein bS18 (72 aa).

This sequence belongs to the bacterial ribosomal protein bS18 family. In terms of assembly, part of the 30S ribosomal subunit. Forms a tight heterodimer with protein bS6.

Binds as a heterodimer with protein bS6 to the central domain of the 16S rRNA, where it helps stabilize the platform of the 30S subunit. The protein is Small ribosomal subunit protein bS18 of Francisella tularensis subsp. holarctica (strain OSU18).